The sequence spans 196 residues: uncharacterized protein (196 aa).

The protein belongs to the CDP-alcohol phosphatidyltransferase class-I family.

This is an uncharacterized protein from Aquifex aeolicus (strain VF5).